Consider the following 352-residue polypeptide: MLPSISINNTSAAYPESINENNNDEINGLVQEFKNLFNGKEGISTCIKHLLELIKNAIRVNDDPYRSNINNPSVTYIDIGSNDTDHITIGIDNQEPIELPANYKDKELVRTIINDNIVEKTHDINNKEMIFSALKEIYDGDPGFIFDKISHKLRHTVTEFDESGKSEPTDLFTWYGKDKKGDSLAIVIKNKNGNDYLSLGYYDQDDYHIQRGIRINGDSLTQYCSENARSASAWFESSKAIMAESFATGSDHQVVNELNGERLREPNEVFKRLGRAIRYNFQVDDAKFRRDNVKEIISTLFANKVDVDHPENKYKDFKNLEDKVEKRLQNRQTKYQNEINQLSALGVNFDDI.

This sequence belongs to the IcaT/YfdF family.

It localises to the secreted. Its function is as follows. May contribute to pathogenesis, although some of its characteristics suggest it is a fossil gene. The protein is Invasion chromosome antigen T of Shigella flexneri serotype 5a (strain M90T).